The primary structure comprises 441 residues: Adenylyltransferase and sulfurtransferase MOCS3 (441 aa).

ATP-binding positions include glycine 83, aspartate 104, 111–115 (TNLHR), lysine 128, and 172–173 (DN). The Zn(2+) site is built by cysteine 213 and cysteine 216. The active-site Glycyl thioester intermediate; for adenylyltransferase activity is the cysteine 230. Zn(2+) is bound by residues cysteine 288 and cysteine 291. One can recognise a Rhodanese domain in the interval 339–439 (AGRDHLLVDV…WTKTIDPNFP (101 aa)). Residue cysteine 395 is the Cysteine persulfide intermediate; for sulfurtransferase activity of the active site.

It in the N-terminal section; belongs to the HesA/MoeB/ThiF family. UBA4 subfamily. It depends on Zn(2+) as a cofactor.

It is found in the cytoplasm. It catalyses the reaction [molybdopterin-synthase sulfur-carrier protein]-C-terminal Gly-Gly + ATP + H(+) = [molybdopterin-synthase sulfur-carrier protein]-C-terminal Gly-Gly-AMP + diphosphate. The enzyme catalyses [molybdopterin-synthase sulfur-carrier protein]-C-terminal Gly-Gly-AMP + S-sulfanyl-L-cysteinyl-[cysteine desulfurase] + AH2 = [molybdopterin-synthase sulfur-carrier protein]-C-terminal-Gly-aminoethanethioate + L-cysteinyl-[cysteine desulfurase] + A + AMP + 2 H(+). It functions in the pathway tRNA modification; 5-methoxycarbonylmethyl-2-thiouridine-tRNA biosynthesis. Its pathway is cofactor biosynthesis; molybdopterin biosynthesis. Its function is as follows. Plays a central role in 2-thiolation of mcm(5)S(2)U at tRNA wobble positions of cytosolic tRNA(Lys), tRNA(Glu) and tRNA(Gln). Also essential during biosynthesis of the molybdenum cofactor. Acts by mediating the C-terminal thiocarboxylation of sulfur carriers URM1 and MOCS2A. Its N-terminus first activates URM1 and MOCS2A as acyl-adenylates (-COAMP), then the persulfide sulfur on the catalytic cysteine is transferred to URM1 and MOCS2A to form thiocarboxylation (-COSH) of their C-terminus. The reaction probably involves hydrogen sulfide that is generated from the persulfide intermediate and that acts as a nucleophile towards URM1 and MOCS2A. Subsequently, a transient disulfide bond is formed. Does not use thiosulfate as sulfur donor; NFS1 probably acting as a sulfur donor for thiocarboxylation reactions. The sequence is that of Adenylyltransferase and sulfurtransferase MOCS3 from Anopheles gambiae (African malaria mosquito).